We begin with the raw amino-acid sequence, 237 residues long: Uridylate kinase (237 aa).

11 to 14 (KLSG) is a binding site for ATP. Glycine 53 serves as a coordination point for UMP. 2 residues coordinate ATP: glycine 54 and arginine 58. UMP-binding positions include aspartate 73 and 134-141 (TGNPFFTT). Residues threonine 161, tyrosine 167, and aspartate 170 each contribute to the ATP site.

It belongs to the UMP kinase family. In terms of assembly, homohexamer.

The protein resides in the cytoplasm. It carries out the reaction UMP + ATP = UDP + ADP. It functions in the pathway pyrimidine metabolism; CTP biosynthesis via de novo pathway; UDP from UMP (UMPK route): step 1/1. With respect to regulation, inhibited by UTP. Its function is as follows. Catalyzes the reversible phosphorylation of UMP to UDP. This is Uridylate kinase from Burkholderia thailandensis (strain ATCC 700388 / DSM 13276 / CCUG 48851 / CIP 106301 / E264).